Reading from the N-terminus, the 285-residue chain is Small ribosomal subunit protein uS2 (285 aa).

A disordered region spans residues 231–285 (GGKSGQAAAEPMAEWERELLEQHNAQQAEQAEAPAAEAPAEPAEAPAAEAAPQGE). Over residues 255-285 (AQQAEQAEAPAAEAPAEPAEAPAAEAAPQGE) the composition is skewed to low complexity.

The protein belongs to the universal ribosomal protein uS2 family.

In Micrococcus luteus (strain ATCC 4698 / DSM 20030 / JCM 1464 / CCM 169 / CCUG 5858 / IAM 1056 / NBRC 3333 / NCIMB 9278 / NCTC 2665 / VKM Ac-2230) (Micrococcus lysodeikticus), this protein is Small ribosomal subunit protein uS2.